A 350-amino-acid polypeptide reads, in one-letter code: MLATADMSDGYTNGARLKISTSSKPKFHFIAGLASGLSSAILLQPADLLKTRIQQAHQTSALLFTIRKILASPQPIRGLWRGTLPSALRTGFGSALYFSSLNALRQCIANQGALVPLHGDRDDKRTRTSALPKLSHTANLLTGAMARTAAGFIMMPVTVIKVRYESDYYAYRSIWGAGRDIVRSEGFRGLFSGFGATAIRDAPYAGLYVVFYEQSKKNLNALNFGGLTTARPLSDEPAREDNSEKQLVTSSISVNFVSGALAAGLATSITNPFDVVKTRLQLMPNKYRNMAHAVRLVLREDGVRSLFGGLGLRMGRKAISSALAWTVYEELILKAEKRWPDQDNIEQLTP.

Solcar repeat units follow at residues 23–107 (SKPK…LRQC), 134–218 (LSHT…SKKN), and 250–334 (SSIS…LILK). The next 6 helical transmembrane spans lie at 29–54 (FIAGLASGLSSAILLQPADLLKTRIQ), 82–108 (GTLPSALRTGFGSALYFSSLNALRQCI), 140–165 (LLTGAMARTAAGFIMMPVTVIKVRYE), 193–216 (GFGATAIRDAPYAGLYVVFYEQSK), 254–280 (VNFVSGALAAGLATSITNPFDVVKTRL), and 309–327 (GLGLRMGRKAISSALAWTV).

The protein belongs to the mitochondrial carrier (TC 2.A.29) family. SLC25A38 subfamily.

The protein localises to the mitochondrion inner membrane. The enzyme catalyses glycine(in) = glycine(out). Its function is as follows. Mitochondrial glycine transporter that imports glycine into the mitochondrial matrix. Plays an important role in providing glycine for the first enzymatic step in heme biosynthesis, the condensation of glycine with succinyl-CoA to produce 5-aminolevulinate (ALA) in the mitochondrial matrix. This chain is Mitochondrial glycine transporter, found in Ajellomyces capsulatus (strain NAm1 / WU24) (Darling's disease fungus).